The following is a 425-amino-acid chain: Polycomb protein esc (425 aa).

Over residues M1 to N10 the composition is skewed to basic and acidic residues. The segment at M1 to Y64 is disordered. Acidic residues predominate over residues E11–G20. The residue at position 15 (S15) is a Phosphoserine. Positions D21–T42 are enriched in low complexity. Over residues R43 to A60 the composition is skewed to basic residues. WD repeat units lie at residues N71–L114, V126–N165, G168–I208, G214–K253, I284–E321, E340–A379, and R388–S424.

Belongs to the WD repeat ESC family. As to quaternary structure, component of the polycomb repressive complex 2 (PRC2, also known as the Esc/E(Z) complex), composed of Caf1-55, esc, E(z), Su(z)12, and possibly pho. PRC2 associates with the accessory components Jarid2 and jing to form the PRC2 Jarid2-jing variant (PRC2.2). PRC2 may also associate with Pcl and HDAC1/Rpd3 during early embryogenesis. This complex is distinct from the PRC1 complex, which contains many other PcG proteins like Pc, Ph, Psc, Su(z)2. The two complexes however cooperate and interact together during the first 3 hours of development to establish PcG silencing. Interacts with corto in vitro. Widely expressed.

It localises to the nucleus. In terms of biological role, polycomb group (PcG) protein. While PcG proteins are generally required to maintain the transcriptionally repressive state of homeotic genes throughout development, this protein is specifically required during the first 6 hours of embryogenesis to establish the repressed state. Component of the Esc/E(z) complex, which methylates 'Lys-9' and 'Lys-27' residues of histone H3, leading to transcriptional repression of the affected target gene. The Esc/E(z) complex is necessary but not sufficient for the repression of homeotic target genes, suggesting that the recruitment of the distinct PRC1 complex is also required. The protein is Polycomb protein esc (esc) of Drosophila melanogaster (Fruit fly).